The primary structure comprises 231 residues: MFGKILTTSLLIAMTFAAPSTEEGKSSKRRQYIAPLAGAAQVPRNPLFFAAPALPVAAAPALVRPAFAPVPVAAAPAFAPVPVAAPMVRPMLQQPAIVAPVAPVVAPVGQCPGGPSLPIECDPKRPWPQCPPQSYCYATNSVDIGPYFCCPIWSTYGAAWRPATPFYNYVPPVPANWPDVARMTANWPAAAVAMPLKARKQQKNEGDDEETEDEQKIGSAIDGWVERQAKL.

A signal peptide spans 1–17 (MFGKILTTSLLIAMTFA). The disordered stretch occupies residues 197-231 (KARKQQKNEGDDEETEDEQKIGSAIDGWVERQAKL).

This is an uncharacterized protein from Caenorhabditis elegans.